We begin with the raw amino-acid sequence, 476 residues long: Proline--tRNA ligase (476 aa).

This sequence belongs to the class-II aminoacyl-tRNA synthetase family. ProS type 3 subfamily. Homodimer.

The protein resides in the cytoplasm. It catalyses the reaction tRNA(Pro) + L-proline + ATP = L-prolyl-tRNA(Pro) + AMP + diphosphate. Its function is as follows. Catalyzes the attachment of proline to tRNA(Pro) in a two-step reaction: proline is first activated by ATP to form Pro-AMP and then transferred to the acceptor end of tRNA(Pro). The protein is Proline--tRNA ligase of Mycoplasmopsis pulmonis (strain UAB CTIP) (Mycoplasma pulmonis).